A 394-amino-acid chain; its full sequence is D-aspartate oxidase (394 aa).

Ile19, Ala57, Ser58, and Gly62 together coordinate FAD. The helical transmembrane segment at 190–210 (LIGHEPTAGVIVCVGLGALVL) threads the bilayer. An N-linked (GlcNAc...) asparagine glycan is attached at Asn214. Residues Arg342, Gly373, and Gln375 each coordinate FAD.

The protein belongs to the DAMOX/DASOX family. FAD is required as a cofactor.

The protein localises to the membrane. The enzyme catalyses D-aspartate + O2 + H2O = oxaloacetate + H2O2 + NH4(+). Selectively catalyzes the oxidative deamination of acidic amino acids. Protects the organism from the toxicity of D-amino acids. Enables the organism to utilize D-amino acids as a source of nutrients. Enables the organism to utilize D-aspartate and D-asparagine as a source of nitrogen. May play a role in its interaction with the host. This chain is D-aspartate oxidase, found in Cryptococcus neoformans var. grubii serotype A (strain H99 / ATCC 208821 / CBS 10515 / FGSC 9487) (Filobasidiella neoformans var. grubii).